The following is a 65-amino-acid chain: Small ribosomal subunit protein bS21 (65 aa).

It belongs to the bacterial ribosomal protein bS21 family.

The chain is Small ribosomal subunit protein bS21 from Thermodesulfovibrio yellowstonii (strain ATCC 51303 / DSM 11347 / YP87).